Consider the following 167-residue polypeptide: Probable chemoreceptor glutamine deamidase CheD (167 aa).

This sequence belongs to the CheD family.

The enzyme catalyses L-glutaminyl-[protein] + H2O = L-glutamyl-[protein] + NH4(+). Its function is as follows. Probably deamidates glutamine residues to glutamate on methyl-accepting chemotaxis receptors (MCPs), playing an important role in chemotaxis. The sequence is that of Probable chemoreceptor glutamine deamidase CheD from Natronomonas pharaonis (strain ATCC 35678 / DSM 2160 / CIP 103997 / JCM 8858 / NBRC 14720 / NCIMB 2260 / Gabara) (Halobacterium pharaonis).